The following is a 348-amino-acid chain: NADH-ubiquinone oxidoreductase chain 2 (348 aa).

Transmembrane regions (helical) follow at residues 3-23 (PIII…VLMS), 25-45 (HWFM…PVLM), 59-79 (YFLT…INLI), 93-115 (TAST…HFWV), 149-169 (LNMT…GWGG), 178-198 (ILAF…MFNP), 201-221 (TLLN…ILIF), 239-259 (IMTV…PLSG), 276-296 (IALA…YMRL), and 326-346 (LPTL…MMML).

Belongs to the complex I subunit 2 family. In terms of assembly, core subunit of respiratory chain NADH dehydrogenase (Complex I) which is composed of 45 different subunits. Interacts with TMEM242.

The protein localises to the mitochondrion inner membrane. The catalysed reaction is a ubiquinone + NADH + 5 H(+)(in) = a ubiquinol + NAD(+) + 4 H(+)(out). Its function is as follows. Core subunit of the mitochondrial membrane respiratory chain NADH dehydrogenase (Complex I) which catalyzes electron transfer from NADH through the respiratory chain, using ubiquinone as an electron acceptor. Essential for the catalytic activity and assembly of complex I. The polypeptide is NADH-ubiquinone oxidoreductase chain 2 (Thyroptera tricolor (Spix's disk-winged bat)).